The following is a 350-amino-acid chain: Histidinol-phosphate aminotransferase 1 (350 aa).

Lys-211 is modified (N6-(pyridoxal phosphate)lysine).

This sequence belongs to the class-II pyridoxal-phosphate-dependent aminotransferase family. Histidinol-phosphate aminotransferase subfamily. In terms of assembly, homodimer. Pyridoxal 5'-phosphate serves as cofactor.

It catalyses the reaction L-histidinol phosphate + 2-oxoglutarate = 3-(imidazol-4-yl)-2-oxopropyl phosphate + L-glutamate. It functions in the pathway amino-acid biosynthesis; L-histidine biosynthesis; L-histidine from 5-phospho-alpha-D-ribose 1-diphosphate: step 7/9. The chain is Histidinol-phosphate aminotransferase 1 from Trichormus variabilis (strain ATCC 29413 / PCC 7937) (Anabaena variabilis).